Here is a 153-residue protein sequence, read N- to C-terminus: Phosphatase NudJ (153 aa).

The Nudix hydrolase domain occupies 3-131 (KPHVTVACVV…LVAESIRCYQ (129 aa)). Positions 36-57 (GHLEADETLVEAAARELWEETG) match the Nudix box motif.

The protein belongs to the Nudix hydrolase family. NudJ subfamily. Monomer. It depends on Mg(2+) as a cofactor.

The protein is Phosphatase NudJ (nudJ) of Escherichia coli O139:H28 (strain E24377A / ETEC).